The following is a 677-amino-acid chain: Transmembrane and coiled-coil domain-containing protein 3 (677 aa).

A signal peptide spans 1 to 22 (MKVLGRSFFWVLFPVLPWAVQA). The stretch at 124–204 (DYKDVVNMKE…EEEIEEHAFD (81 aa)) forms a coiled coil. Residues Asn206 and Asn230 are each glycosylated (N-linked (GlcNAc...) asparagine). Transmembrane regions (helical) follow at residues 286 to 306 (WLCTAIGLPTMFGYIICGVLL), 317 to 337 (IVQVETLGEFGVFFTLFLVGL), 350 to 370 (ISLQGPCYMTLLMIAFGLLWG), 416 to 436 (VLLGMLVTQDVQLGLFMAVMP), 456 to 476 (ILVLIGQILFSLAAVFLLCLV), 498 to 518 (EILILGISAFIFLMLTVTELL), 554 to 574 (FLAIVFFASIGLHVFPTFVAY), 578 to 598 (VLVFLTLSVVVMKFLLAALVL), 608 to 628 (YIKWIVSAGLAQVSEFSFVLG), and 640 to 660 (EVYLLILSVTTLSLLLAPVLW).

Belongs to the monovalent cation:proton antiporter 2 (CPA2) transporter (TC 2.A.37) family. In terms of tissue distribution, expressed in the cornea, lens capsule and choroid-retinal pigment epithelium (at protein level).

Its subcellular location is the membrane. Functionally, probable Na(+)/H(+) antiporter. The sequence is that of Transmembrane and coiled-coil domain-containing protein 3 (TMCO3) from Homo sapiens (Human).